Reading from the N-terminus, the 576-residue chain is Low-affinity glucose transporter HXT4 (576 aa).

The tract at residues 1 to 56 (MSEEAAYQEDTAVQNTPADALSPVESDSNSALSTPSNKAERDDMKDFDENHEESNN) is disordered. The Cytoplasmic segment spans residues 1 to 66 (MSEEAAYQED…YVEIPKKPAS (66 aa)). Polar residues predominate over residues 25–37 (ESDSNSALSTPSN). A compositionally biased stretch (basic and acidic residues) spans 38 to 54 (KAERDDMKDFDENHEES). Lys45 is covalently cross-linked (Glycyl lysine isopeptide (Lys-Gly) (interchain with G-Cter in ubiquitin)). The chain crosses the membrane as a helical span at residues 67–87 (AYVTVSICCLMVAFGGFVFGW). Residues 88 to 122 (DTGTISGFVAQTDFIRRFGMKHHDGTYYLSKVRTG) are Extracellular-facing. The chain crosses the membrane as a helical span at residues 123-143 (LIVSIFNIGCAIGGIILARLG). Over 144-149 (DMYGRK) the chain is Cytoplasmic. A helical transmembrane segment spans residues 150–170 (MGLIVVVVIYIIGIIIQIASI). The Extracellular segment spans residues 171-180 (NKWYQYFIGR). Residues 181 to 201 (IISGLGVGGIAVLSPMLISEV) traverse the membrane as a helical segment. At 202-207 (SPKHIR) the chain is on the cytoplasmic side. A helical membrane pass occupies residues 208–228 (GTLVSCYQLMITLGIFLGYCT). Residues 229-242 (NYGTKTYTNSVQWR) are Extracellular-facing. Residues 243-263 (VPLGLGFAWALFMIGGMTFVP) form a helical membrane-spanning segment. The Cytoplasmic portion of the chain corresponds to 264–346 (ESPRYLVEVG…IQSLQQLTGD (83 aa)). A helical membrane pass occupies residues 347 to 363 (NYFFYYGTTVFTAVGLE). The Extracellular portion of the chain corresponds to 364–369 (DSFETS). A helical membrane pass occupies residues 370–387 (IVLGIVNFASTFVGIFLV). At 388-394 (ERYGRRR) the chain is on the cytoplasmic side. A helical transmembrane segment spans residues 395 to 415 (CLLWGAASMTACMVVFASVGV). The Extracellular portion of the chain corresponds to 416–437 (TRLWPNGKKNGSSKGAGNCMIV). The N-linked (GlcNAc...) asparagine glycan is linked to Asn425. The chain crosses the membrane as a helical span at residues 438-458 (FTCFYLFCFATTWAPIPFVVN). Residues 459 to 475 (SETFPLRVKSKCMAIAQ) are Cytoplasmic-facing. Residues 476-496 (ACNWIWGFLIGFFTPFISGAI) traverse the membrane as a helical segment. Asp497 is a topological domain (extracellular). A helical membrane pass occupies residues 498–518 (FYYGYVFMGCLVFSYFYVFFF). At 519-576 (VPETKGLTLEEVNTLWEEGVLPWKSPSWVPPNKRGTDYNADDLMHDDQPFYKKMFGKK) the chain is on the cytoplasmic side.

The protein belongs to the major facilitator superfamily. Sugar transporter (TC 2.A.1.1) family.

The protein resides in the cell membrane. With respect to regulation, xylose uptake is strongly inhibited by glucose. Its function is as follows. Low-affinity glucose transporter. Can also transport xylose. The protein is Low-affinity glucose transporter HXT4 (HXT4) of Saccharomyces cerevisiae (strain YJM789) (Baker's yeast).